Here is a 322-residue protein sequence, read N- to C-terminus: Malate dehydrogenase (322 aa).

Residues 10 to 15 and D34 contribute to the NAD(+) site; that span reads GSGQIG. 2 residues coordinate substrate: R83 and R89. NAD(+) is bound by residues N96 and 119 to 121; that span reads ITN. Substrate contacts are provided by N121 and R152. The Proton acceptor role is filled by H176.

The protein belongs to the LDH/MDH superfamily. MDH type 3 family.

The catalysed reaction is (S)-malate + NAD(+) = oxaloacetate + NADH + H(+). Catalyzes the reversible oxidation of malate to oxaloacetate. In Nitrobacter winogradskyi (strain ATCC 25391 / DSM 10237 / CIP 104748 / NCIMB 11846 / Nb-255), this protein is Malate dehydrogenase.